A 281-amino-acid chain; its full sequence is UPF0046 protein C25E10.12 (281 aa).

Belongs to the UPF0046 family.

The chain is UPF0046 protein C25E10.12 from Caenorhabditis elegans.